The following is a 935-amino-acid chain: Phosphoenolpyruvate carboxylase (935 aa).

Residues H161 and K593 contribute to the active site.

It belongs to the PEPCase type 1 family. Mg(2+) serves as cofactor.

It carries out the reaction oxaloacetate + phosphate = phosphoenolpyruvate + hydrogencarbonate. In terms of biological role, forms oxaloacetate, a four-carbon dicarboxylic acid source for the tricarboxylic acid cycle. This chain is Phosphoenolpyruvate carboxylase, found in Mycobacterium avium (strain 104).